The following is a 314-amino-acid chain: uncharacterized protein (314 aa).

An N-terminal signal peptide occupies residues 1-26 (MRGRVAGSCAPLGLLLVCLRLPGLFA). Residues 41-60 (GTNLPQLGQPSLTGPPNSEH) show a composition bias toward polar residues. Disordered regions lie at residues 41-65 (GTNLPQLGQPSLTGPPNSEHPQPAL), 77-96 (LKLSVPPSDGFPPAGGSAVQ), 147-191 (GSGP…GKIL), and 292-314 (PPGSSWNTPAGFPNPPSPGLQWG). A compositionally biased stretch (low complexity) spans 147–157 (GSGPLPGESSP). A compositionally biased stretch (basic and acidic residues) spans 167–177 (SHLHQDSESRR). Positions 303–314 (FPNPPSPGLQWG) are enriched in pro residues.

Binds to numerous extracellular matrix proteins. As to expression, taste cell specific.

The protein localises to the secreted. It localises to the extracellular space. The protein resides in the extracellular matrix. This is an uncharacterized protein from Macaca mulatta (Rhesus macaque).